Consider the following 455-residue polypeptide: Chromosomal replication initiator protein DnaA (455 aa).

The interval 1–74 is domain I, interacts with DnaA modulators; that stretch reads MFNFEKFWQH…IQSAYGYAGV (74 aa). Residues 74–117 form a domain II region; sequence VELLPVFQISEDSDTPERIVTPEPQHNLQTTPTRAPQREFAKDL. The segment at 118 to 334 is domain III, AAA+ region; the sequence is KLNEKYTFDN…GALVKVQAYA (217 aa). ATP contacts are provided by glycine 162, glycine 164, lysine 165, and threonine 166. Residues 335–455 form a domain IV, binds dsDNA region; sequence TIEKADIDIN…VFDLKQMLEH (121 aa).

It belongs to the DnaA family. As to quaternary structure, oligomerizes as a right-handed, spiral filament on DNA at oriC.

The protein resides in the cytoplasm. In terms of biological role, plays an essential role in the initiation and regulation of chromosomal replication. ATP-DnaA binds to the origin of replication (oriC) to initiate formation of the DNA replication initiation complex once per cell cycle. Binds the DnaA box (a 9 base pair repeat at the origin) and separates the double-stranded (ds)DNA. Forms a right-handed helical filament on oriC DNA; dsDNA binds to the exterior of the filament while single-stranded (ss)DNA is stabiized in the filament's interior. The ATP-DnaA-oriC complex binds and stabilizes one strand of the AT-rich DNA unwinding element (DUE), permitting loading of DNA polymerase. After initiation quickly degrades to an ADP-DnaA complex that is not apt for DNA replication. Binds acidic phospholipids. This Lactobacillus acidophilus (strain ATCC 700396 / NCK56 / N2 / NCFM) protein is Chromosomal replication initiator protein DnaA.